We begin with the raw amino-acid sequence, 318 residues long: Protein-L-histidine N-pros-methyltransferase (318 aa).

The signal sequence occupies residues 1–18 (MRLLAGWLCLSLASVWLA). N-linked (GlcNAc...) asparagine glycosylation is present at asparagine 35. S-adenosyl-L-homocysteine-binding residues include glutamate 174, asparagine 210, and tyrosine 295.

It belongs to the METTL9 family. As to expression, expressed in liver, colon, small intestine, skin, kidney and to a lesser extent in spleen, lung, thymus and stomach. Not detected in fibroblast and endothelial cells.

It is found in the endoplasmic reticulum. Its subcellular location is the mitochondrion. It catalyses the reaction L-histidyl-[protein] + S-adenosyl-L-methionine = N(pros)-methyl-L-histidyl-[protein] + S-adenosyl-L-homocysteine + H(+). Protein-histidine N-methyltransferase that specifically catalyzes 1-methylhistidine (pros-methylhistidine) methylation of target proteins. Specifically methylates the second His of proteins with a His-x-His (HxH) motif (where 'x' is preferably a small amino acid), while exploiting the first one as a recognition signature. Catalyzes methylation of target proteins such as S100A9, NDUFB3, SLC39A5, SLC39A7, ARMC6 and DNAJB12; 1-methylhistidine modification may affect the binding of zinc and other metals to its target proteins. Constitutes the main methyltransferase for the 1-methylhistidine modification in cell. In Mus musculus (Mouse), this protein is Protein-L-histidine N-pros-methyltransferase.